Reading from the N-terminus, the 68-residue chain is Large ribosomal subunit protein bL35 (68 aa).

Basic residues predominate over residues 1–25 (MGTKIKTHKGTKKRFRLSAKGKAMH). The segment at 1–43 (MGTKIKTHKGTKKRFRLSAKGKAMHRQSGTSHLAKGLSKKRRR) is disordered.

Belongs to the bacterial ribosomal protein bL35 family.

This Rhodopirellula baltica (strain DSM 10527 / NCIMB 13988 / SH1) protein is Large ribosomal subunit protein bL35.